Consider the following 377-residue polypeptide: Membrane progestin receptor epsilon (377 aa).

Residues 1-40 are disordered; the sequence is MPRRLQPRGAGTKGPPAPAPAASGAARNSHSAASRDPPAS. At 1-86 the chain is on the cytoplasmic side; it reads MPRRLQPRGA…VLKPTNETLN (86 aa). Residues 9–26 are compositionally biased toward low complexity; the sequence is GAGTKGPPAPAPAASGAA. The helical transmembrane segment at 87-107 threads the bilayer; sequence FWTHFIPLLLFLSKFCRLFFL. At 108–116 the chain is on the extracellular side; that stretch reads SGGDVPFHH. The helical transmembrane segment at 117–137 threads the bilayer; that stretch reads PWLLPLWCYASGVLLTFAMSC. The Cytoplasmic portion of the chain corresponds to 138–162; that stretch reads TAHVFSCLSLRLRAAFFYLDYASIS. Residues 163–183 traverse the membrane as a helical segment; the sequence is YYGFGSTVAYYYYLLPGLSLL. Residues 184 to 205 lie on the Extracellular side of the membrane; the sequence is DARVMTPYLQQRLGWHVDCTRL. A helical membrane pass occupies residues 206-226; that stretch reads IAAYRALVLPVAFVLAVACTV. Topologically, residues 227–243 are cytoplasmic; that stretch reads ACCKSRTDWCTYPFALR. Residues 244-264 form a helical membrane-spanning segment; that stretch reads TFVFVMPLSMACPIMLESWLF. Residues 265-301 lie on the Extracellular side of the membrane; it reads DLRGENPTLFVHFYRRYFWLVVAAFFNVSKIPERIQP. Residues 302–322 form a helical membrane-spanning segment; sequence GLFDIIGHSHQLFHIFTFLSI. Residues 323–343 lie on the Cytoplasmic side of the membrane; sequence YDQVYYVEEGLRQFLQAPPAA. A helical transmembrane segment spans residues 344–364; that stretch reads PTFSGTVGYMLLLVVCLGLVI. At 365–377 the chain is on the extracellular side; the sequence is RKFLNSSEFCSKK.

The protein belongs to the ADIPOR family. In terms of assembly, homodimer. Expression levels vary widely in a range of tissues. Expressed in the brain, at high level in the pituitary gland and also in hypothalamus, limbic system, caudate nucleus accumens, pons and olfactory bulb.

Its subcellular location is the cell membrane. In terms of biological role, plasma membrane progesterone (P4) receptor coupled to G proteins. Seems to act through a G(s) mediated pathway. May be involved in regulating rapid P4 signaling in the nervous system. Also binds dehydroepiandrosterone (DHEA), pregnanolone, pregnenolone and allopregnanolone. In Homo sapiens (Human), this protein is Membrane progestin receptor epsilon.